The primary structure comprises 332 residues: Anthranilate phosphoribosyltransferase (332 aa).

5-phospho-alpha-D-ribose 1-diphosphate contacts are provided by residues G79, 82-83 (GD), T87, 89-92 (NIST), 107-115 (KHGNRSVSS), and S119. G79 is a binding site for anthranilate. S91 serves as a coordination point for Mg(2+). Anthranilate is bound at residue N110. Position 165 (R165) interacts with anthranilate. Mg(2+) contacts are provided by D223 and E224.

The protein belongs to the anthranilate phosphoribosyltransferase family. In terms of assembly, homodimer. Mg(2+) is required as a cofactor.

The enzyme catalyses N-(5-phospho-beta-D-ribosyl)anthranilate + diphosphate = 5-phospho-alpha-D-ribose 1-diphosphate + anthranilate. Its pathway is amino-acid biosynthesis; L-tryptophan biosynthesis; L-tryptophan from chorismate: step 2/5. In terms of biological role, catalyzes the transfer of the phosphoribosyl group of 5-phosphorylribose-1-pyrophosphate (PRPP) to anthranilate to yield N-(5'-phosphoribosyl)-anthranilate (PRA). The polypeptide is Anthranilate phosphoribosyltransferase (Vibrio parahaemolyticus serotype O3:K6 (strain RIMD 2210633)).